We begin with the raw amino-acid sequence, 141 residues long: Histone H2B (141 aa).

The span at 1-10 (MAPKAAEKKP) shows a compositional bias: basic and acidic residues. Residues 1–49 (MAPKAAEKKPSTGGKAPAGGKAPAEKKEAGKKTAAAASGDKKKRGKTRK) are disordered. Lys8 and Lys9 each carry N6-acetyllysine; alternate. Glycyl lysine isopeptide (Lys-Gly) (interchain with G-Cter in SUMO); alternate cross-links involve residues Lys8 and Lys9. Residues 11-22 (STGGKAPAGGKA) are compositionally biased toward low complexity. Lys15 carries the N6-acetyllysine modification. Lys26 bears the N6-acetyllysine; alternate mark. Lys26 is covalently cross-linked (Glycyl lysine isopeptide (Lys-Gly) (interchain with G-Cter in SUMO); alternate). Residue Lys27 forms a Glycyl lysine isopeptide (Lys-Gly) (interchain with G-Cter in SUMO) linkage. Lys135 participates in a covalent cross-link: Glycyl lysine isopeptide (Lys-Gly) (interchain with G-Cter in ubiquitin).

This sequence belongs to the histone H2B family. In terms of assembly, the nucleosome is a histone octamer containing two molecules each of H2A, H2B, H3 and H4 assembled in one H3-H4 heterotetramer and two H2A-H2B heterodimers. The octamer wraps approximately 147 bp of DNA. Monoubiquitinated by the ubc2-bre1 complex to form H2BK123ub1. H2BK123ub1 gives a specific tag for epigenetic transcriptional activation and is also prerequisite for H3K4me and H3K79me formation. H2BK123ub1 also modulates the formation of double-strand breaks during meiosis and is a prerequisite for DNA-damage checkpoint activation. Post-translationally, acetylated by gcn5 to form H2BK11ac and H2BK16ac. H2BK16ac can also be formed by esa1. Acetylation of N-terminal lysines and particularly formation of H2BK11acK16ac has a positive effect on transcription. In terms of processing, sumoylation to form H2BK6su or H2BK7su, and probably also H2BK16su or H2BK17su, occurs preferentially near the telomeres and represses gene transcription.

It localises to the nucleus. The protein resides in the chromosome. Core component of nucleosome. Nucleosomes wrap and compact DNA into chromatin, limiting DNA accessibility to the cellular machineries which require DNA as a template. Histones thereby play a central role in transcription regulation, DNA repair, DNA replication and chromosomal stability. DNA accessibility is regulated via a complex set of post-translational modifications of histones, also called histone code, and nucleosome remodeling. This chain is Histone H2B (htb1), found in Aspergillus oryzae (strain ATCC 42149 / RIB 40) (Yellow koji mold).